Here is a 184-residue protein sequence, read N- to C-terminus: Phosphodiesterase YfcE (184 aa).

Mn(2+)-binding residues include aspartate 9, histidine 11, aspartate 37, asparagine 73, histidine 105, histidine 127, and histidine 129.

It belongs to the metallophosphoesterase superfamily. YfcE family. Mn(2+) serves as cofactor.

Functionally, shows phosphodiesterase activity. The polypeptide is Phosphodiesterase YfcE (yfcE) (Escherichia coli O157:H7).